A 467-amino-acid polypeptide reads, in one-letter code: Cytochrome P450 monooxygenase azaI (467 aa).

Residues 1–28 (MESLAQLPGIFLPLAGCVLALSLSALLA) form the signal peptide. Cys411 provides a ligand contact to heme.

It belongs to the cytochrome P450 family. It depends on heme as a cofactor.

The protein operates within secondary metabolite biosynthesis. Cytochrome P450 monooxygenase; part of the gene cluster that mediates the biosynthesis of azaphilones, a class of fungal metabolites characterized by a highly oxygenated pyrano-quinone bicyclic core and exhibiting a broad range of bioactivities. In the first step, the non-reducing polyketide synthase azaA forms the hexaketide precursor from successive condensations of five malonyl-CoA units, presumably with a simple acetyl-CoA starter unit. The reactive polyketide chain then undergoes a PT-mediated C2-C7 cyclization to afford the aromatic ring and is eventually released as an aldehyde through the R-domain. The putative ketoreductase azaE is proposed to catalyze the reduction of the terminal ketone resulting in the early culture product FK17-P2a. The monooxygenase azaH was demonstrated to be the only enzyme required to convert FK17-P2a to azanigerone E. AzaH first hydroxylates the benzaldehyde intermediate FK17-P2a at C4, which triggers the formation of the pyran-ring to afford azanigerone E. In parallel, the 2,4-dimethylhexanoyl chain is synthesized by the HR-PKS azaB and is proposed to be transferred to the C4-hydroxyl of azanigerone E by the acyltransferase azaD directly from the ACP domain of azaB. Alternatively, the 2,4-dimethyl-hexanoyl chain may be offloaded from the HR-PKS as a carboxylic acid and converted to an acyl-CoA by azaF. The resulting acyl-CoA molecule could then be taken up as a substrate by AzaD to form azanigerone B. To yield the carboxylic acid substituent in azanigerone A, the hydroxypropyl side chain of azanigerone B would need to undergo a C-C oxidative cleavage catalyzed by cytochrome P450 AzaI. AzaI is proposed to act on a vicinal diol that leads to a C-C bond scission either through an alkoxyradical intermediate or a peroxy complex. In the biosynthesis of azanigerone A, azanigerone B first undergoes hydroxylation at C10, possibly catalyzed by one of the two FAD-dependent monooxygenases encoded in the cluster, azaG or azaL, resulting in the vicinal diol azanigerone C. Oxidative cleavage of azanigerone C by azaI would yield the corresponding aldehyde derivative of azanigerone A. Finally, the dehydrogenase azaJ is proposed to convert the aldehyde functional group into the carboxylic acid, completing the conversion from azanigerone B to azanigerone A. Alternatively, the oxidation of aldehyde to carboxylic acid may be catalyzed by the same P450 enzyme azaI via consecutive oxidation or by endogenous alcohol dehydrogenase. In Aspergillus niger (strain ATCC 1015 / CBS 113.46 / FGSC A1144 / LSHB Ac4 / NCTC 3858a / NRRL 328 / USDA 3528.7), this protein is Cytochrome P450 monooxygenase azaI.